Consider the following 581-residue polypeptide: La-related protein 7 (581 aa).

The residue at position 1 (Met1) is an N-acetylmethionine. The segment covering 1-10 has biased composition (polar residues); it reads METESGNQKN. Disordered regions lie at residues 1-28, 188-368, and 410-440; these read METE…KKKR, NPPE…ERHK, and KSES…CPTQ. One can recognise an HTH La-type RNA-binding domain in the interval 28 to 122; it reads RSRVKQVLAD…KPLGERPKDE (95 aa). The RRM domain maps to 125 to 203; sequence RTVYVELLPK…PRKPGIFPKT (79 aa). The segment covering 219–228 has biased composition (basic residues); sequence KKKKKKKGRM. A compositionally biased stretch (basic and acidic residues) spans 229–240; the sequence is KKEDNVQAKEEN. Residue Lys237 forms a Glycyl lysine isopeptide (Lys-Gly) (interchain with G-Cter in SUMO2) linkage. Thr257 carries the post-translational modification Phosphothreonine. A phosphoserine mark is found at Ser258, Ser261, Ser273, Ser298, Ser299, and Ser300. A compositionally biased stretch (basic and acidic residues) spans 316-335; the sequence is IQKDIIKEPSEASKENRDIE. At Ser337 the chain carries Phosphoserine. A Phosphothreonine modification is found at Thr338. Ser351 is subject to Phosphoserine. Residues 354–367 show a composition bias toward basic residues; sequence KTKRKHKKKHKERH. Lys410 participates in a covalent cross-link: Glycyl lysine isopeptide (Lys-Gly) (interchain with G-Cter in SUMO2). Positions 449–562 constitute a xRRM domain; it reads QFVSGVIVKI…TEKLITKAEK (114 aa).

This sequence belongs to the LARP7 family. As to quaternary structure, core component of the 7SK RNP complex, at least composed of 7SK RNA, LARP7, MEPCE, HEXIM1 (or HEXIM2) and P-TEFb (composed of CDK9 and CCNT1/cyclin-T1). Interacts with METTL16. Interacts with RBM7; upon genotoxic stress this interaction is enhanced, triggering the release of inactive P-TEFb complex from the core, yielding to P-TEFb complex activation. Associates with box C/D small nucleolar ribonucleoprotein (snoRNP) complexes.

It localises to the nucleus. Its subcellular location is the nucleoplasm. RNA-binding protein that specifically binds distinct small nuclear RNA (snRNAs) and regulates their processing and function. Specifically binds the 7SK snRNA (7SK RNA) and acts as a core component of the 7SK ribonucleoprotein (RNP) complex, thereby acting as a negative regulator of transcription elongation by RNA polymerase II. The 7SK RNP complex sequesters the positive transcription elongation factor b (P-TEFb) in a large inactive 7SK RNP complex preventing RNA polymerase II phosphorylation and subsequent transcriptional elongation. The 7SK RNP complex also promotes snRNA gene transcription by RNA polymerase II via interaction with the little elongation complex (LEC). LARP7 specifically binds to the highly conserved 3'-terminal U-rich stretch of 7SK RNA; on stimulation, remains associated with 7SK RNA, whereas P-TEFb is released from the complex. LARP7 also acts as a regulator of mRNA splicing fidelity by promoting U6 snRNA processing. Specifically binds U6 snRNAs and associates with a subset of box C/D RNP complexes: promotes U6 snRNA 2'-O-methylation by facilitating U6 snRNA loading into box C/D RNP complexes. U6 snRNA 2'-O-methylation is required for mRNA splicing fidelity. Binds U6 snRNAs with a 5'-CAGGG-3' sequence motif. U6 snRNA processing is required for spermatogenesis. In Macaca fascicularis (Crab-eating macaque), this protein is La-related protein 7.